The sequence spans 400 residues: Subtilisin-like protease 2 (400 aa).

The first 20 residues, 1–20 (MKFSQSLIALAACFLPLIAA), serve as a signal peptide directing secretion. A propeptide spanning residues 21-119 (APEEAQHAKI…IERDGKVQAN (99 aa)) is cleaved from the precursor. The 76-residue stretch at 42 to 117 (SYIVVFNKGV…AWIERDGKVQ (76 aa)) folds into the Inhibitor I9 domain. A glycan (N-linked (GlcNAc...) asparagine) is linked at Asn82. In terms of domain architecture, Peptidase S8 spans 128–400 (TWGLGRISHK…NLIAYNGNGA (273 aa)). Active-site charge relay system residues include Asp160, His192, and Ser345.

Belongs to the peptidase S8 family.

Its subcellular location is the secreted. Potently inhibited by the serine peptidase inhibitor chymostatin. Also inhibited by antpain and PMSF. In terms of biological role, major secreted subtilisin-like serine endopeptidase. Preferentially cleaves substrates containing hydrophobic residues at P4, positively charged residues at P3, small or flexible residues at P2, and large, bulky residues at P1. Mediates the degradation of collagen, the major structural protein in the mammalian host. Degrades the nonhelical regions of collagen that function in the cross-linking of the helical components. May function as virulence factor involved in epidermal wing necrosis observed in white nose syndrome (WNS) in bats. In Pseudogymnoascus destructans (strain ATCC MYA-4855 / 20631-21) (Bat white-nose syndrome fungus), this protein is Subtilisin-like protease 2.